A 503-amino-acid polypeptide reads, in one-letter code: Probable cytosol aminopeptidase (503 aa).

Mn(2+) is bound by residues Lys270 and Asp275. Lys282 is a catalytic residue. Residues Asp293, Asp352, and Glu354 each contribute to the Mn(2+) site. Residue Arg356 is part of the active site.

This sequence belongs to the peptidase M17 family. Mn(2+) is required as a cofactor.

Its subcellular location is the cytoplasm. It catalyses the reaction Release of an N-terminal amino acid, Xaa-|-Yaa-, in which Xaa is preferably Leu, but may be other amino acids including Pro although not Arg or Lys, and Yaa may be Pro. Amino acid amides and methyl esters are also readily hydrolyzed, but rates on arylamides are exceedingly low.. It carries out the reaction Release of an N-terminal amino acid, preferentially leucine, but not glutamic or aspartic acids.. In terms of biological role, presumably involved in the processing and regular turnover of intracellular proteins. Catalyzes the removal of unsubstituted N-terminal amino acids from various peptides. The protein is Probable cytosol aminopeptidase of Citrobacter koseri (strain ATCC BAA-895 / CDC 4225-83 / SGSC4696).